The sequence spans 518 residues: Glutamate--cysteine ligase (518 aa).

The protein belongs to the glutamate--cysteine ligase type 1 family. Type 1 subfamily.

It carries out the reaction L-cysteine + L-glutamate + ATP = gamma-L-glutamyl-L-cysteine + ADP + phosphate + H(+). Its pathway is sulfur metabolism; glutathione biosynthesis; glutathione from L-cysteine and L-glutamate: step 1/2. The sequence is that of Glutamate--cysteine ligase from Shigella boydii serotype 18 (strain CDC 3083-94 / BS512).